The chain runs to 291 residues: MTSATIPAHAELILPAPAKLNLMLHILGRRADGYHQLQTLFQFLDHGDELGFSVRQDGEIRLHTPIDGVPHASNLIVRAAKRLQEASGTTLGADIWLDKRLPMGGGIGGGSSDAATTLLGLDHLWHTRLGEDRLAEIGLALGADVPVFVRGRAAFAEGVGELLTPVELEEPWFLVAVPQVFVSTAEVFGAPELTRDTPPIKVRSLLAGGGRNDCQPVVEKRYPEVRNALILLNKFVSARLTGTGACIFGSFPNRDDADKVARQLPGTLPSFVAQGRNISMLHRRLQALAKK.

K19 is an active-site residue. 102–112 (PMGGGIGGGSS) contributes to the ATP binding site. D144 is a catalytic residue.

Belongs to the GHMP kinase family. IspE subfamily.

The enzyme catalyses 4-CDP-2-C-methyl-D-erythritol + ATP = 4-CDP-2-C-methyl-D-erythritol 2-phosphate + ADP + H(+). It participates in isoprenoid biosynthesis; isopentenyl diphosphate biosynthesis via DXP pathway; isopentenyl diphosphate from 1-deoxy-D-xylulose 5-phosphate: step 3/6. Its function is as follows. Catalyzes the phosphorylation of the position 2 hydroxy group of 4-diphosphocytidyl-2C-methyl-D-erythritol. The polypeptide is 4-diphosphocytidyl-2-C-methyl-D-erythritol kinase (Ectopseudomonas mendocina (strain ymp) (Pseudomonas mendocina)).